The following is a 776-amino-acid chain: Ion-translocating oxidoreductase complex subunit C (776 aa).

4Fe-4S ferredoxin-type domains lie at 368 to 397 (MGAP…QQLY) and 407 to 436 (KATA…VQYF). Residues C377, C380, C383, C387, C416, C419, C422, and C426 each contribute to the [4Fe-4S] cluster site. Composition is skewed to basic and acidic residues over residues 534 to 543 (ARARQAEKVQ), 597 to 611 (ADEK…RKAA), 633 to 647 (ADEK…RKAA), 669 to 683 (ADEK…RKAA), and 705 to 719 (ADEK…RKAT). Residues 534–754 (ARARQAEKVQ…ENEAEDPRKA (221 aa)) form a disordered region. The segment covering 721 to 743 (EAAIARAKARKAAQAGERAQAAN) has biased composition (low complexity).

The protein belongs to the 4Fe4S bacterial-type ferredoxin family. RnfC subfamily. The complex is composed of six subunits: RnfA, RnfB, RnfC, RnfD, RnfE and RnfG. [4Fe-4S] cluster serves as cofactor.

It is found in the cell inner membrane. Functionally, part of a membrane-bound complex that couples electron transfer with translocation of ions across the membrane. The chain is Ion-translocating oxidoreductase complex subunit C from Cronobacter sakazakii (strain ATCC BAA-894) (Enterobacter sakazakii).